A 384-amino-acid polypeptide reads, in one-letter code: UDP-galactopyranose mutase (384 aa).

Positions 1–23 (MKSKKILIVGAGFSGAVIGRQLA) are cleaved as a signal peptide. Residues serine 14, 33–34 (DQ), asparagine 41, and 60–61 (HI) each bind FAD. Residues asparagine 84, phenylalanine 151, threonine 156, tryptophan 160, and tyrosine 185 each contribute to the UDP-alpha-D-galactose site. Position 219 (phenylalanine 219) interacts with FAD. Asparagine 270, arginine 280, and tyrosine 314 together coordinate UDP-alpha-D-galactose. Arginine 343 lines the FAD pocket. Tyrosine 349 provides a ligand contact to UDP-alpha-D-galactose. 350–355 (LDMDVT) contacts FAD.

The protein belongs to the UDP-galactopyranose/dTDP-fucopyranose mutase family. Homodimer. FAD is required as a cofactor.

It catalyses the reaction UDP-alpha-D-galactose = UDP-alpha-D-galactofuranose. The protein operates within bacterial outer membrane biogenesis; LPS O-antigen biosynthesis. Involved in the biosynthesis of the galactose-containing O-side-chain polysaccharide backbone structure of D-galactan I which is a key component of lipopolysaccharide (LPS). Catalyzes the interconversion through a 2-keto intermediate of uridine diphosphogalactopyranose (UDP-GalP) into uridine diphosphogalactofuranose (UDP-GalF) which is the biosynthetic precursor of galactofuranosyl residues. The sequence is that of UDP-galactopyranose mutase (rfbD) from Klebsiella pneumoniae.